A 141-amino-acid chain; its full sequence is Hemoglobin subunit alpha (141 aa).

One can recognise a Globin domain in the interval 1–141 (VLSDKDKTNV…VSTVLTSKYR (141 aa)). Serine 3 is modified (phosphoserine). N6-succinyllysine is present on lysine 7. Threonine 8 is subject to Phosphothreonine. Lysine 11 is modified (N6-succinyllysine). An N6-acetyllysine; alternate modification is found at lysine 16. The residue at position 16 (lysine 16) is an N6-succinyllysine; alternate. Phosphotyrosine is present on tyrosine 24. Phosphoserine is present on serine 35. An N6-succinyllysine modification is found at lysine 40. A Phosphoserine modification is found at serine 49. Histidine 58 serves as a coordination point for O2. Histidine 87 serves as a coordination point for heme b. Residue serine 102 is modified to Phosphoserine. Residue threonine 108 is modified to Phosphothreonine. Serine 124 is subject to Phosphoserine. 2 positions are modified to phosphothreonine: threonine 134 and threonine 137. Serine 138 is subject to Phosphoserine.

Belongs to the globin family. In terms of assembly, heterotetramer of two alpha chains and two beta chains. In terms of tissue distribution, red blood cells.

In terms of biological role, involved in oxygen transport from the lung to the various peripheral tissues. Functionally, hemopressin acts as an antagonist peptide of the cannabinoid receptor CNR1. Hemopressin-binding efficiently blocks cannabinoid receptor CNR1 and subsequent signaling. The protein is Hemoglobin subunit alpha (HBA) of Elephas maximus (Indian elephant).